A 324-amino-acid polypeptide reads, in one-letter code: Coproporphyrin III ferrochelatase (324 aa).

The Fe(2+) site is built by H184 and E266.

Belongs to the ferrochelatase family.

It is found in the cytoplasm. It carries out the reaction Fe-coproporphyrin III + 2 H(+) = coproporphyrin III + Fe(2+). Its pathway is porphyrin-containing compound metabolism; protoheme biosynthesis. Functionally, involved in coproporphyrin-dependent heme b biosynthesis. Catalyzes the insertion of ferrous iron into coproporphyrin III to form Fe-coproporphyrin III. In Lactiplantibacillus plantarum (strain ATCC BAA-793 / NCIMB 8826 / WCFS1) (Lactobacillus plantarum), this protein is Coproporphyrin III ferrochelatase.